The sequence spans 438 residues: Coenzyme A disulfide reductase (438 aa).

Gly-8 to Glu-33 serves as a coordination point for FAD. Substrate contacts are provided by Thr-15, Gln-19, Arg-22, Ser-39, and Asn-42. Cys-43 functions as the Nucleophile in the catalytic mechanism. The active-site Redox-active is Cys-43. Lys-71 is a binding site for substrate. Val-151–Asn-166 is a binding site for NADP(+). Thr-267–Asp-277 provides a ligand contact to FAD. Position 299 (His-299) interacts with substrate. Residue Tyr-419 participates in FAD binding. Lys-427 provides a ligand contact to substrate.

Belongs to the class-III pyridine nucleotide-disulfide oxidoreductase family. As to quaternary structure, homodimer. FAD is required as a cofactor.

It catalyses the reaction NADP(+) + 2 CoA = CoA-disulfide + NADPH + H(+). In terms of biological role, catalyzes specifically the NADPH-dependent reduction of coenzyme A disulfide. This Staphylococcus aureus (strain MSSA476) protein is Coenzyme A disulfide reductase.